Consider the following 436-residue polypeptide: Adenylosuccinate synthetase (436 aa).

GTP contacts are provided by residues 12 to 18 and 40 to 42; these read GDEGKGK and GHT. The Proton acceptor role is filled by D13. Positions 13 and 40 each coordinate Mg(2+). IMP contacts are provided by residues 13-16, 38-41, T128, R142, Q223, T238, and R302; these read DEGK and NAGH. H41 serves as the catalytic Proton donor. Residue 298-304 participates in substrate binding; the sequence is TTTGRRR. GTP is bound by residues R304, 330–332, and 412–414; these read KLD and SLG.

Belongs to the adenylosuccinate synthetase family. Homodimer. Requires Mg(2+) as cofactor.

The protein resides in the cytoplasm. The enzyme catalyses IMP + L-aspartate + GTP = N(6)-(1,2-dicarboxyethyl)-AMP + GDP + phosphate + 2 H(+). It participates in purine metabolism; AMP biosynthesis via de novo pathway; AMP from IMP: step 1/2. In terms of biological role, plays an important role in the de novo pathway of purine nucleotide biosynthesis. Catalyzes the first committed step in the biosynthesis of AMP from IMP. The sequence is that of Adenylosuccinate synthetase from Prochlorococcus marinus (strain MIT 9215).